The sequence spans 465 residues: Putative multidrug resistance protein MdtD (465 aa).

12 consecutive transmembrane segments (helical) span residues 12-32 (LWIV…VNTA), 49-69 (SVIV…GWLA), 72-92 (IGVK…SLMC), 138-158 (FVTL…GFLV), 165-185 (WIFL…LLLM), 195-215 (FDIS…LALD), 219-239 (GLGL…IALG), 267-287 (LVGS…TPIF), 290-310 (IGLG…IIGS), 329-351 (VLVN…AIMG), 393-413 (LLSM…GILL), and 430-450 (SAFL…ALIF).

The protein belongs to the major facilitator superfamily. TCR/Tet family.

The protein resides in the cell inner membrane. The protein is Putative multidrug resistance protein MdtD of Yersinia pseudotuberculosis serotype I (strain IP32953).